The primary structure comprises 489 residues: UDP-N-acetylmuramoyl-L-alanyl-D-glutamate--2,6-diaminopimelate ligase (489 aa).

Ser30 serves as a coordination point for UDP-N-acetyl-alpha-D-muramoyl-L-alanyl-D-glutamate. An ATP-binding site is contributed by 108–114 (GTNGKTT). Residues Asn149, 150-151 (TT), Ser177, Gln183, and Arg185 contribute to the UDP-N-acetyl-alpha-D-muramoyl-L-alanyl-D-glutamate site. N6-carboxylysine is present on Lys217. Meso-2,6-diaminopimelate-binding positions include Arg383, 407 to 410 (DNPR), Gly459, and Glu463. The Meso-diaminopimelate recognition motif signature appears at 407-410 (DNPR).

This sequence belongs to the MurCDEF family. MurE subfamily. Mg(2+) is required as a cofactor. In terms of processing, carboxylation is probably crucial for Mg(2+) binding and, consequently, for the gamma-phosphate positioning of ATP.

It is found in the cytoplasm. The enzyme catalyses UDP-N-acetyl-alpha-D-muramoyl-L-alanyl-D-glutamate + meso-2,6-diaminopimelate + ATP = UDP-N-acetyl-alpha-D-muramoyl-L-alanyl-gamma-D-glutamyl-meso-2,6-diaminopimelate + ADP + phosphate + H(+). The protein operates within cell wall biogenesis; peptidoglycan biosynthesis. Functionally, catalyzes the addition of meso-diaminopimelic acid to the nucleotide precursor UDP-N-acetylmuramoyl-L-alanyl-D-glutamate (UMAG) in the biosynthesis of bacterial cell-wall peptidoglycan. This chain is UDP-N-acetylmuramoyl-L-alanyl-D-glutamate--2,6-diaminopimelate ligase, found in Geobacillus kaustophilus (strain HTA426).